The chain runs to 449 residues: Tryptophan synthase beta chain 2 (449 aa).

An N6-(pyridoxal phosphate)lysine modification is found at Lys-116.

This sequence belongs to the TrpB family. As to quaternary structure, tetramer of two alpha and two beta chains. Pyridoxal 5'-phosphate serves as cofactor.

The enzyme catalyses (1S,2R)-1-C-(indol-3-yl)glycerol 3-phosphate + L-serine = D-glyceraldehyde 3-phosphate + L-tryptophan + H2O. Its pathway is amino-acid biosynthesis; L-tryptophan biosynthesis; L-tryptophan from chorismate: step 5/5. The beta subunit is responsible for the synthesis of L-tryptophan from indole and L-serine. The chain is Tryptophan synthase beta chain 2 (trpB2) from Aeropyrum pernix (strain ATCC 700893 / DSM 11879 / JCM 9820 / NBRC 100138 / K1).